The chain runs to 910 residues: Protein translocase subunit SecA (910 aa).

Residues Q89, 107 to 111, and D502 each bind ATP; that span reads GEGKT. Positions 894, 896, 905, and 906 each coordinate Zn(2+).

Belongs to the SecA family. Monomer and homodimer. Part of the essential Sec protein translocation apparatus which comprises SecA, SecYEG and auxiliary proteins SecDF-YajC and YidC. Zn(2+) is required as a cofactor.

The protein resides in the cell inner membrane. The protein localises to the cytoplasm. It catalyses the reaction ATP + H2O + cellular proteinSide 1 = ADP + phosphate + cellular proteinSide 2.. Its function is as follows. Part of the Sec protein translocase complex. Interacts with the SecYEG preprotein conducting channel. Has a central role in coupling the hydrolysis of ATP to the transfer of proteins into and across the cell membrane, serving both as a receptor for the preprotein-SecB complex and as an ATP-driven molecular motor driving the stepwise translocation of polypeptide chains across the membrane. This chain is Protein translocase subunit SecA, found in Mesorhizobium japonicum (strain LMG 29417 / CECT 9101 / MAFF 303099) (Mesorhizobium loti (strain MAFF 303099)).